We begin with the raw amino-acid sequence, 349 residues long: Anthranilate phosphoribosyltransferase (349 aa).

5-phospho-alpha-D-ribose 1-diphosphate is bound by residues G82, 85-86 (GD), T90, 92-95 (NVST), 110-118 (KHGNRSVSS), and G122. An anthranilate-binding site is contributed by G82. S94 is a binding site for Mg(2+). N113 contributes to the anthranilate binding site. Residue R168 participates in anthranilate binding. D232 and E233 together coordinate Mg(2+).

The protein belongs to the anthranilate phosphoribosyltransferase family. As to quaternary structure, homodimer. Mg(2+) is required as a cofactor.

The enzyme catalyses N-(5-phospho-beta-D-ribosyl)anthranilate + diphosphate = 5-phospho-alpha-D-ribose 1-diphosphate + anthranilate. The protein operates within amino-acid biosynthesis; L-tryptophan biosynthesis; L-tryptophan from chorismate: step 2/5. In terms of biological role, catalyzes the transfer of the phosphoribosyl group of 5-phosphorylribose-1-pyrophosphate (PRPP) to anthranilate to yield N-(5'-phosphoribosyl)-anthranilate (PRA). This Methanosphaera stadtmanae (strain ATCC 43021 / DSM 3091 / JCM 11832 / MCB-3) protein is Anthranilate phosphoribosyltransferase.